Consider the following 381-residue polypeptide: Deoxyguanosinetriphosphate triphosphohydrolase-like protein (381 aa).

Residues 76-203 (RMTHTLEVAG…ADLSDEIAYT (128 aa)) enclose the HD domain.

Belongs to the dGTPase family. Type 2 subfamily.

The sequence is that of Deoxyguanosinetriphosphate triphosphohydrolase-like protein from Leptospira borgpetersenii serovar Hardjo-bovis (strain JB197).